Reading from the N-terminus, the 22-residue chain is Chymotrypsin inhibitor (22 aa).

The disordered stretch occupies residues 1 to 22; it reads FDESFGFQGPSTYEKTPLGEPA.

In terms of tissue distribution, hemolymph.

The protein localises to the secreted. Its subcellular location is the extracellular space. In terms of biological role, inhibits chymotrypsin stoichiometrically. Also inhibits porcine pancreatic elastase and trypsin. The polypeptide is Chymotrypsin inhibitor (Mythimna unipuncta (Armyworm moth)).